A 189-amino-acid chain; its full sequence is Elongation factor P (189 aa).

Belongs to the elongation factor P family.

It localises to the cytoplasm. It functions in the pathway protein biosynthesis; polypeptide chain elongation. Its function is as follows. Involved in peptide bond synthesis. Stimulates efficient translation and peptide-bond synthesis on native or reconstituted 70S ribosomes in vitro. Probably functions indirectly by altering the affinity of the ribosome for aminoacyl-tRNA, thus increasing their reactivity as acceptors for peptidyl transferase. In Ehrlichia canis (strain Jake), this protein is Elongation factor P.